The chain runs to 785 residues: MAAKLQDLELSSEEVDRFSKAFKDPTFREMFIQYAEEISDPENRKKYEQEIYKMENERGMDIKFIHPKPGYVLLSSVNGVQKCYLNICSNDLIQKPEFKPGKDGEGKAGLHWSLPYSLSPGRDDLSKDWSKHVIYDVVFHPDTLHIASKNGKFKGIVDSTALEAVASQFNVTLDKANVRTLSMKYKGVPNPSVLRKPLPEASPKSRDLEDPLCFPYPYDVPTAVGTEKKDQKRVIQKECKQHLVTPEQDPNVQVAATPNYTVRHRSYVDLQDFRDSRDSTPSPVPKELVITVDLPLLNSAAGVNLHIAGKNLSLESEKPAYKLNVKLPYAVEDNQGKAQFNKVKKQLIITVPVIQHNILSLMQDHFQEARGEKDNQNKAEHSVLNKEHTDNSGITSARGTEKLLELEEENQFEGLASISSMDTGASHLPEILPNLNTFGKEQVVNQMNEDTPNVPTDNLVCPTFTCSQDPTSLTLIVHVRDIDENSICADVGSNHYHIRCYRKQSRAFYDLLVTFLPHDIIISNEVSVNISEDNVVIGLTKCPESFGFWKKLYFGVSGQSLQERRFVIEENINKVLACSIPLSQVSPSIQEHQPLIEVLEMTDEKTHIRLNEPKIEYVDSAEHNEQCTDHSESERDTSLELPNVDGKDSAEQCSSQVSPCKHNIELGREHTSERDKEPKPTSCTAESTSGQQPNDSHLVCPGDNCAQDSNAENKMACLKSSVQTTQESDLDEDDMPDNSDHLQNSASSNNILKEISSKDGSVQVISDHTTHCPFQFQNSLLFELD.

Composition is skewed to basic and acidic residues over residues 622-638 and 662-679; these read EHNE…RDTS and HNIE…KEPK. Disordered regions lie at residues 622 to 698 and 719 to 749; these read EHNE…DSHL and KSSV…ASSN. Residues 681 to 695 are compositionally biased toward polar residues; that stretch reads TSCTAESTSGQQPND. Residues 728–737 show a composition bias toward acidic residues; that stretch reads SDLDEDDMPD.

It belongs to the PIH1 family. Kintoun subfamily.

The protein resides in the cytoplasm. Its subcellular location is the dynein axonemal particle. Functionally, required for cytoplasmic pre-assembly of axonemal dyneins, thereby playing a central role in motility in cilia and flagella. Involved in pre-assembly of dynein arm complexes in the cytoplasm before intraflagellar transport loads them for the ciliary compartment. In Xenopus tropicalis (Western clawed frog), this protein is Protein kintoun.